The following is a 383-amino-acid chain: Protein KES1 (383 aa).

A compositionally biased stretch (basic and acidic residues) spans 317 to 339; it reads FETASKDKARIENAQRQKRKDEA. The segment at 317–346 is disordered; it reads FETASKDKARIENAQRQKRKDEAAAGTPHQ.

This sequence belongs to the OSBP family.

Functionally, lipid transporter involved in lipid countertransport between the Golgi complex and membranes of the endoplasmic reticulum: specifically exchanges sterol with phosphatidylinositol 4-phosphate (PI4P), delivering sterol to the Golgi in exchange for PI4P, which is degraded by the SAC1 phosphatase in the endoplasmic reticulum. The sequence is that of Protein KES1 (KES1) from Mycosarcoma maydis (Corn smut fungus).